The chain runs to 80 residues: RNA-binding protein Hfq (80 aa).

The Sm domain maps to 7-67 (ESFLNTARKK…ITTIVPHERL (61 aa)).

This sequence belongs to the Hfq family. In terms of assembly, homohexamer.

Its function is as follows. RNA chaperone that binds small regulatory RNA (sRNAs) and mRNAs to facilitate mRNA translational regulation in response to envelope stress, environmental stress and changes in metabolite concentrations. Also binds with high specificity to tRNAs. The chain is RNA-binding protein Hfq from Aquifex aeolicus (strain VF5).